Here is a 143-residue protein sequence, read N- to C-terminus: Flagellar assembly factor FliW (143 aa).

It belongs to the FliW family. In terms of assembly, interacts with flagellin in a 1:1 complex. Two molecules interact with each CsrA dimer; cannot interact with both flagellin and CsrA simultaneously. Has a higher affinity for CsrA than for flagellin. Interacts directly with flagellin (hag), forms a 3-way complex of Hag, FliS and FliW in which Flis and FliW do not directly interact. Interaction with Hag may occur via the C-terminus of Hag.

It is found in the cytoplasm. Its function is as follows. Acts as an anti-CsrA protein, binds CsrA and prevents it from repressing translation of its target genes, one of which is flagellin. Binds to flagellin (hag), which is implicated in polymerization, and participates in the assembly of the flagellum. An antagonist to translational regulator CsrA, it binds CsrA at an allosteric site and non-competitively inhibits CsrA binding to hag RNA. Partner switching by flagellin between FliW and CsrA provides a flagellar assembly checkpoint to tightly control the timing of flagellin synthesis. Flagellin binds to assembly factor FliW, freeing translation regulator CsrA to repress translation of the flagellin mRNA. When the flagellar hook is assembled flagellin is secreted, depleting intracellular flagellin, which frees FliW to interact with CsrA and inhibits CsrA binding to mRNA. This derepresses flagellin translation and provides protein for flagellar assembly. Once the flagellar filament is completed cytoplasmic flagellin levels rise and CsrA translation repression of flagellin reinitiates. Binds to CsrA and displaces it from hag mRNA. Binds to hag mRNA itself, but only at much higher concentrations than those required to displace CsrA. This chain is Flagellar assembly factor FliW, found in Bacillus subtilis (strain 168).